The sequence spans 88 residues: DNA-directed RNA polymerase subunit omega (88 aa).

It belongs to the RNA polymerase subunit omega family. The RNAP catalytic core consists of 2 alpha, 1 beta, 1 beta' and 1 omega subunit. When a sigma factor is associated with the core the holoenzyme is formed, which can initiate transcription.

It catalyses the reaction RNA(n) + a ribonucleoside 5'-triphosphate = RNA(n+1) + diphosphate. Functionally, promotes RNA polymerase assembly. Latches the N- and C-terminal regions of the beta' subunit thereby facilitating its interaction with the beta and alpha subunits. In Thermobifida fusca (strain YX), this protein is DNA-directed RNA polymerase subunit omega.